Consider the following 186-residue polypeptide: MSDEYDENDLKRRMDGAIESLRKEFAGLRTGRASAGLLEPIKVDAYGTPTPINQLGNISVPEPRMITLQVWDKNMVAAVDKAIRNSGIGLNPVMEGQLLRIPIPPLNEERRAEIAKLAGNYAEHARVAVRNVRRDGMDALKKMEKDGDLSEDEQKAFSEDVQKLTNEAIKRIDENLKSKQEEIMQV.

Belongs to the RRF family.

The protein resides in the cytoplasm. Responsible for the release of ribosomes from messenger RNA at the termination of protein biosynthesis. May increase the efficiency of translation by recycling ribosomes from one round of translation to another. This Maricaulis maris (strain MCS10) (Caulobacter maris) protein is Ribosome-recycling factor.